Here is a 434-residue protein sequence, read N- to C-terminus: Guanosine-inosine kinase (434 aa).

GMP contacts are provided by residues 40 to 45, 93 to 97, and R198; these read DQTLVD and GTIGN. ATP contacts are provided by residues 284-289, G357, and N402; that span reads TAGPIG.

Belongs to the carbohydrate kinase PfkB family. The cofactor is Mg(2+).

The catalysed reaction is guanosine + ATP = GMP + ADP + H(+). It catalyses the reaction inosine + ATP = IMP + ADP + H(+). Its pathway is purine metabolism; IMP biosynthesis via salvage pathway; IMP from inosine: step 1/1. It participates in purine metabolism; GMP biosynthesis via salvage pathway. In terms of biological role, catalyzes the phosphorylation of guanosine and inosine to GMP and IMP, respectively. This is Guanosine-inosine kinase from Escherichia coli O157:H7.